A 107-amino-acid polypeptide reads, in one-letter code: uncharacterized protein (107 aa).

Positions 1 to 32 are disordered; it reads MDSLASGRWRRRRTEELPAAGDAKRACRRSEP. The span at 22–31 shows a compositional bias: basic and acidic residues; the sequence is DAKRACRRSE.

This is an uncharacterized protein from Mus musculus (Mouse).